The chain runs to 525 residues: GMP synthase [glutamine-hydrolyzing] (525 aa).

The 199-residue stretch at 9-207 folds into the Glutamine amidotransferase type-1 domain; that stretch reads RILILDFGSQ…VLDICQCEAL (199 aa). Cysteine 86 serves as the catalytic Nucleophile. Residues histidine 181 and glutamate 183 contribute to the active site. The region spanning 208–400 is the GMPS ATP-PPase domain; it reads WTPAKIIDDA…LGLPYNMLYR (193 aa). 235 to 241 serves as a coordination point for ATP; sequence SGGVDSS.

Homodimer.

It catalyses the reaction XMP + L-glutamine + ATP + H2O = GMP + L-glutamate + AMP + diphosphate + 2 H(+). It participates in purine metabolism; GMP biosynthesis; GMP from XMP (L-Gln route): step 1/1. Its function is as follows. Catalyzes the synthesis of GMP from XMP. This Pectobacterium atrosepticum (strain SCRI 1043 / ATCC BAA-672) (Erwinia carotovora subsp. atroseptica) protein is GMP synthase [glutamine-hydrolyzing].